The chain runs to 447 residues: MTDNKYLTVTDLNYYITQKFKNDPYLHKVFLQGELSNFRYRRNSHQYFSLKDEKSKINVVMFRSYFDKVKFKPEEGMKVYVVGYVSVYGPQGSYQFYAENMEPAGLGALYEQLKQLQAKLAKEGLFNPEHKRKLPRFPDKIAVVTSASGAVIHDIMVTANRRFPHAEIDLFPAQVQGDTAADSLVKAMRQIAAQGDEYDVMIIGRGGGSLEDLWSFNEEEVVRQVYAMPMPVISSVGHETDTTLCDLVADARAATPTAAAEYATPNLADELAGIHQLQSRLIAGMQNNINQKRDRLNRIKNSVIMREPTRLYDQQIQQVDLLKQRLQNSIQNKVNNSLQNYRLLKQRLLSVSPDKQIAGMEQQEKFLAKQLNDNMKHYLKNKRSDFSKIVQQLDDYSPLKTLERGFVYTTNEEGETVSSVDQIKKDDHLNLHFKDGEVTATVTEVKK.

It belongs to the XseA family. Heterooligomer composed of large and small subunits.

The protein localises to the cytoplasm. The enzyme catalyses Exonucleolytic cleavage in either 5'- to 3'- or 3'- to 5'-direction to yield nucleoside 5'-phosphates.. Its function is as follows. Bidirectionally degrades single-stranded DNA into large acid-insoluble oligonucleotides, which are then degraded further into small acid-soluble oligonucleotides. This chain is Exodeoxyribonuclease 7 large subunit, found in Lactobacillus helveticus (strain DPC 4571).